The sequence spans 361 residues: Cyclin-Y-like protein 2 (361 aa).

The Cyclin N-terminal domain occupies 204–286 (MRLTAEFAIV…QFLKLINYNN (83 aa)).

It belongs to the cyclin family. Cyclin Y subfamily.

The protein is Cyclin-Y-like protein 2 (CCNYL2) of Homo sapiens (Human).